The primary structure comprises 243 residues: Large ribosomal subunit protein uL2 (243 aa).

Positions 1 to 12 are enriched in basic residues; that stretch reads MGRRIQGQRRGR. Disordered regions lie at residues 1-38 and 198-243; these read MGRR…SDDT and VDHP…GSSE. Composition is skewed to basic and acidic residues over residues 24 to 34 and 221 to 231; these read YKAELSHKQSE and PPGRKVGDIAS.

The protein belongs to the universal ribosomal protein uL2 family. As to quaternary structure, part of the 50S ribosomal subunit. Forms a bridge to the 30S subunit in the 70S ribosome.

In terms of biological role, one of the primary rRNA binding proteins. Required for association of the 30S and 50S subunits to form the 70S ribosome, for tRNA binding and peptide bond formation. It has been suggested to have peptidyltransferase activity; this is somewhat controversial. Makes several contacts with the 16S rRNA in the 70S ribosome. This Haloquadratum walsbyi (strain DSM 16790 / HBSQ001) protein is Large ribosomal subunit protein uL2.